We begin with the raw amino-acid sequence, 256 residues long: MKIITCYKCVPDEQDIAINNADGTLDFSKADSKISQYDLNAIEAACQLKQQLGDAQVVAMSVGGKALTNAKGRKDVLSRGPDELIVVIDDQFEQALPQQTASALAAAAQKSGFDLLICGDGSSDLYAQQVGLLVGEALNIPAINGVSKILSLTDSTLTVERELEDEVETLSIPLPAVIAVSTDINTPQIPSMKAILGAAKKPVQVWSPADIGLNSVPAYSAQQVAAPKQRERQRVVIEGDGEEQIAAFVENLRKII.

This sequence belongs to the ETF beta-subunit/FixA family. Heterodimer of FixA and FixB.

It functions in the pathway amine and polyamine metabolism; carnitine metabolism. Required for anaerobic carnitine reduction. May bring reductant to CaiA. In Salmonella agona (strain SL483), this protein is Protein FixA.